A 579-amino-acid chain; its full sequence is Zinc finger protein 382 (579 aa).

Residues 1-12 (MGRPGRKPRGRA) show a composition bias toward basic residues. The segment at 1-37 (MGRPGRKPRGRARPGLFPFPKEELRQGGSSPANLNAM) is disordered. Positions 12–135 (ARPGLFPFPK…DKPPKSIVII (124 aa)) are mediates interaction with TRIM28. The segment covering 27–36 (GGSSPANLNA) has biased composition (polar residues). 2 represses transcription regions span residues 40-81 (GPVS…FISV) and 105-240 (IFPS…PEQR). Residues 42–113 (VSFKDVTVDF…RIFPSQSYLE (72 aa)) form the KRAB domain. The C2H2-type 1; degenerate zinc finger occupies 241-263 (FEYNKCDSSFLMTGVEFPHGRAH). 9 consecutive C2H2-type zinc fingers follow at residues 325–347 (FQCP…ERIH), 353–375 (YICC…EKTH), 381–403 (YLCV…HKAH), 409–431 (YECT…QRTH), 437–459 (YQCT…QRTH), 465–487 (YICS…QRIH), 493–515 (YICS…YRIH), 521–543 (NGCP…QKIH), and 549–571 (YECQ…QKTH). The required for transcriptional repression activity; probably mediates sequence-specific DNA-binding stretch occupies residues 325 to 579 (FQCPYCGNSF…THKTETMRFQ (255 aa)).

The protein belongs to the krueppel C2H2-type zinc-finger protein family. As to quaternary structure, interacts with TRIM28; enhances the transcriptional repressor activity.

The protein resides in the nucleus. In terms of biological role, functions as a sequence-specific transcriptional repressor. The sequence is that of Zinc finger protein 382 (Znf382) from Mus musculus (Mouse).